We begin with the raw amino-acid sequence, 451 residues long: Magnesium transporter MgtE (451 aa).

At 1–285 (MVQNMTYDEL…TKAYVAAYRR (285 aa)) the chain is on the cytoplasmic side. 2 residues coordinate Mg(2+): aspartate 64 and aspartate 96. 2 consecutive CBS domains span residues 140-203 (MTNR…VQDL) and 204-260 (MFTR…EADE). 7 residues coordinate Mg(2+): glutamate 218, aspartate 228, aspartate 249, aspartate 252, glutamate 257, glutamate 260, and aspartate 261. Residues 286–306 (LPWLILLLFIGLISGSIISYF) traverse the membrane as a helical segment. The Extracellular portion of the chain corresponds to 307-311 (EDALK). Residues 312 to 332 (QVVALAFFMPMVSGMTGNTGT) traverse the membrane as a helical segment. At 333 to 371 (QSLAVVIRGLSKEEMNKKTIVRLIFREFRTSIFIGAVCS) the chain is on the cytoplasmic side. 2 consecutive transmembrane segments (helical) span residues 372-392 (VLIA…FVVA) and 393-413 (SSLF…PIIL). The Cytoplasmic portion of the chain corresponds to 414–427 (HKLKVDPAIASGPL). Residues aspartate 419 and aspartate 433 each coordinate Mg(2+). The helical transmembrane segment at 428-448 (ITTLNDILSLLIYFGIATAFI) threads the bilayer. Topologically, residues 449–451 (HSL) are extracellular.

The protein belongs to the SLC41A transporter family. Homodimer.

The protein resides in the cell membrane. It carries out the reaction Mg(2+)(in) = Mg(2+)(out). Its activity is regulated as follows. Binds cyclic di-AMP (c-di-AMP), which may regulate the transporter activity. In terms of biological role, acts as a magnesium transporter. MgtE is the dominant transporter under rich-medium growth conditions, and it may provide the primary route of magnesium import in B.subtilis, while the other putative transport proteins are likely to be utilized for more-specialized growth conditions. The sequence is that of Magnesium transporter MgtE from Bacillus subtilis (strain 168).